The following is a 348-amino-acid chain: MSELIDDFATIYPFPPKPAALTEGEKAGLRDNIARLLKACNAVIVAHYYTDPEIQALAEATGGCVADSLEMARFGSSHPATTLLVAGVRFMGETAKILSPEKTVLMPTLHAECSLDLGCPEAEFSAFCDAHPDRTVVVYANTSAAVKARADWVVTSSIAVELIDHLDSLGEKIIWAPDRHLGRYVQKQTGADMLCWQSACIVHDEFKTQALRRMKRLYPDAAVLVHPESPQAVVDLADVVGSTSQLIQAAKTLKQQQMIVATDRGIFYKMQQACPEKNLLEAPTAGEGATCRSCAHCPWMAMNGLKAIAAGLERGGVEHDIRVDEAVRQRALVPLDRMLSFAADLKRC.

Residues histidine 47 and serine 68 each contribute to the iminosuccinate site. Cysteine 113 lines the [4Fe-4S] cluster pocket. Iminosuccinate-binding positions include tyrosine 139–asparagine 141 and serine 156. Cysteine 200 is a [4Fe-4S] cluster binding site. Residues histidine 226–glutamate 228 and threonine 243 each bind iminosuccinate. Residue cysteine 297 coordinates [4Fe-4S] cluster.

This sequence belongs to the quinolinate synthase family. Type 1 subfamily. [4Fe-4S] cluster serves as cofactor.

Its subcellular location is the cytoplasm. The enzyme catalyses iminosuccinate + dihydroxyacetone phosphate = quinolinate + phosphate + 2 H2O + H(+). It participates in cofactor biosynthesis; NAD(+) biosynthesis; quinolinate from iminoaspartate: step 1/1. Its function is as follows. Catalyzes the condensation of iminoaspartate with dihydroxyacetone phosphate to form quinolinate. The chain is Quinolinate synthase from Sodalis glossinidius (strain morsitans).